The sequence spans 142 residues: Protein archease (142 aa).

Residues D12, D141, and I142 each coordinate Ca(2+).

Belongs to the archease family. In solution, exists as a monomer, trimer and hexamer. Oligomeric states form a tripartite complex with tRNA and PAB1947 methyltransferase.

Its function is as follows. Activates the tRNA-splicing ligase complex by facilitating the enzymatic turnover of catalytic subunit RtcB. Acts by promoting the guanylylation of RtcB, a key intermediate step in tRNA ligation. Can also alter the NTP specificity of RtcB such that ATP, dGTP or ITP is used efficiently. Chaperone or modulator of proteins involved in DNA or RNA processing. Protects the tRNA (cytosine-5-)-methyltransferase PAB1947 against aggregation and increases its specificity. The polypeptide is Protein archease (Pyrococcus abyssi (strain GE5 / Orsay)).